The chain runs to 360 residues: Putative mRNA-decapping protein (360 aa).

The segment at 11–28 adopts a CCHC-type zinc-finger fold; the sequence is HICSNCGRSGHEFRNCIE. The Nudix hydrolase domain maps to 163–347; the sequence is YKYDNILYHF…KKRILTRVYL (185 aa). Residues 242 to 264 carry the Nudix box motif; that stretch reads GRRDKRSEENMVCACREFEEETG. Glu249 contributes to the Mg(2+) binding site. The active-site Nucleophile is the Glu258. A Mg(2+)-binding site is contributed by Glu262.

The protein belongs to the Nudix hydrolase family. DIPP subfamily. It depends on Mg(2+) as a cofactor. Mn(2+) is required as a cofactor.

It catalyses the reaction diphospho-myo-inositol polyphosphate + H2O = myo-inositol polyphosphate + phosphate.. Functionally, might function as a decapping enzyme required for the removal of the 5'-end m7GpppN cap tethered to viral and host mRNAs to allow their decay in cells. In addition to the mRNA cap, probably also efficiently hydrolyzes diphosphoinositol polyphosphates. In Acanthamoeba polyphaga (Amoeba), this protein is Putative mRNA-decapping protein.